The primary structure comprises 138 residues: Small ribosomal subunit protein uS8 (138 aa).

This sequence belongs to the universal ribosomal protein uS8 family. As to quaternary structure, part of the 30S ribosomal subunit. Contacts proteins S5 and S12.

Functionally, one of the primary rRNA binding proteins, it binds directly to 16S rRNA central domain where it helps coordinate assembly of the platform of the 30S subunit. In Thermus aquaticus, this protein is Small ribosomal subunit protein uS8.